Reading from the N-terminus, the 502-residue chain is Cysteine--tRNA ligase (502 aa).

C30 lines the Zn(2+) pocket. The 'HIGH' region signature appears at 32 to 42; that stretch reads PTIYDYAHIGN. Zn(2+) is bound by residues C224, H263, and E267. Residues 296 to 300 carry the 'KMSKS' region motif; sequence KMSKS. Position 299 (K299) interacts with ATP.

Belongs to the class-I aminoacyl-tRNA synthetase family. As to quaternary structure, monomer. Zn(2+) is required as a cofactor.

The protein localises to the cytoplasm. It catalyses the reaction tRNA(Cys) + L-cysteine + ATP = L-cysteinyl-tRNA(Cys) + AMP + diphosphate. The chain is Cysteine--tRNA ligase from Bartonella quintana (strain Toulouse) (Rochalimaea quintana).